The chain runs to 887 residues: Lon protease homolog 2, peroxisomal (887 aa).

One can recognise a Lon N-terminal domain in the interval 11 to 256 (LGILAFRNKV…KATELVDRHL (246 aa)). Residues 72-101 (YPGGGTDSGERNVKSQPGLSDSRKADGKSQ) form a disordered region. 409-416 (GPPGVGKT) is an ATP binding site. The 186-residue stretch at 693-878 (VSNPGVSVGL…EVLEQAFEGG (186 aa)) folds into the Lon proteolytic domain. Catalysis depends on residues S784 and K827. A Microbody targeting signal motif is present at residues 885–887 (ARL).

This sequence belongs to the peptidase S16 family.

It is found in the peroxisome matrix. The catalysed reaction is Hydrolysis of proteins in presence of ATP.. ATP-dependent serine protease that mediates the selective degradation of misfolded and unassembled polypeptides in the peroxisomal matrix. Necessary for type 2 peroxisome targeting signal (PTS2)-containing protein processing and facilitates peroxisome matrix protein import. The chain is Lon protease homolog 2, peroxisomal from Spinacia oleracea (Spinach).